A 217-amino-acid polypeptide reads, in one-letter code: Orotate phosphoribosyltransferase (217 aa).

Position 26 (Lys-26) interacts with 5-phospho-alpha-D-ribose 1-diphosphate. 34-35 (FF) contacts orotate. Residues 72–73 (YK), Arg-99, Lys-100, Lys-103, His-105, and 124–132 (DDVITAGTA) contribute to the 5-phospho-alpha-D-ribose 1-diphosphate site. Positions 128 and 156 each coordinate orotate.

Belongs to the purine/pyrimidine phosphoribosyltransferase family. PyrE subfamily. As to quaternary structure, homodimer. It depends on Mg(2+) as a cofactor.

The catalysed reaction is orotidine 5'-phosphate + diphosphate = orotate + 5-phospho-alpha-D-ribose 1-diphosphate. It participates in pyrimidine metabolism; UMP biosynthesis via de novo pathway; UMP from orotate: step 1/2. Functionally, catalyzes the transfer of a ribosyl phosphate group from 5-phosphoribose 1-diphosphate to orotate, leading to the formation of orotidine monophosphate (OMP). This Aeromonas salmonicida (strain A449) protein is Orotate phosphoribosyltransferase.